We begin with the raw amino-acid sequence, 199 residues long: Cytochrome c oxidase subunit 2 (199 aa).

The helical transmembrane segment at 1–13 threads the bilayer; it reads AICSLVLYLLTLM. At 14–26 the chain is on the mitochondrial matrix side; that stretch reads LMEKLSSNTVDAQ. Residues 27–54 traverse the membrane as a helical segment; sequence EVELIWTILPAIVLILLALPSLQILYMM. Residues 55–199 are Mitochondrial intermembrane-facing; the sequence is DEIDEPDLTL…SSLLSISSSL (145 aa). His-128, Cys-163, Glu-165, Cys-167, His-171, and Met-174 together coordinate Cu cation. Position 165 (Glu-165) interacts with Mg(2+).

Belongs to the cytochrome c oxidase subunit 2 family. As to quaternary structure, component of the cytochrome c oxidase (complex IV, CIV), a multisubunit enzyme composed of 14 subunits. The complex is composed of a catalytic core of 3 subunits MT-CO1, MT-CO2 and MT-CO3, encoded in the mitochondrial DNA, and 11 supernumerary subunits COX4I, COX5A, COX5B, COX6A, COX6B, COX6C, COX7A, COX7B, COX7C, COX8 and NDUFA4, which are encoded in the nuclear genome. The complex exists as a monomer or a dimer and forms supercomplexes (SCs) in the inner mitochondrial membrane with NADH-ubiquinone oxidoreductase (complex I, CI) and ubiquinol-cytochrome c oxidoreductase (cytochrome b-c1 complex, complex III, CIII), resulting in different assemblies (supercomplex SCI(1)III(2)IV(1) and megacomplex MCI(2)III(2)IV(2)). Found in a complex with TMEM177, COA6, COX18, COX20, SCO1 and SCO2. Interacts with TMEM177 in a COX20-dependent manner. Interacts with COX20. Interacts with COX16. It depends on Cu cation as a cofactor.

It localises to the mitochondrion inner membrane. It carries out the reaction 4 Fe(II)-[cytochrome c] + O2 + 8 H(+)(in) = 4 Fe(III)-[cytochrome c] + 2 H2O + 4 H(+)(out). Functionally, component of the cytochrome c oxidase, the last enzyme in the mitochondrial electron transport chain which drives oxidative phosphorylation. The respiratory chain contains 3 multisubunit complexes succinate dehydrogenase (complex II, CII), ubiquinol-cytochrome c oxidoreductase (cytochrome b-c1 complex, complex III, CIII) and cytochrome c oxidase (complex IV, CIV), that cooperate to transfer electrons derived from NADH and succinate to molecular oxygen, creating an electrochemical gradient over the inner membrane that drives transmembrane transport and the ATP synthase. Cytochrome c oxidase is the component of the respiratory chain that catalyzes the reduction of oxygen to water. Electrons originating from reduced cytochrome c in the intermembrane space (IMS) are transferred via the dinuclear copper A center (CU(A)) of subunit 2 and heme A of subunit 1 to the active site in subunit 1, a binuclear center (BNC) formed by heme A3 and copper B (CU(B)). The BNC reduces molecular oxygen to 2 water molecules using 4 electrons from cytochrome c in the IMS and 4 protons from the mitochondrial matrix. The protein is Cytochrome c oxidase subunit 2 (MT-CO2) of Casuarius bennetti (Dwarf cassowary).